A 70-amino-acid chain; its full sequence is uncharacterized protein (70 aa).

This is an uncharacterized protein from Saccharomyces cerevisiae (strain ATCC 204508 / S288c) (Baker's yeast).